Here is a 236-residue protein sequence, read N- to C-terminus: Peptidase E (236 aa).

Residues S122, D137, and H159 each act as charge relay system in the active site.

Belongs to the peptidase S51 family.

The protein localises to the cytoplasm. It carries out the reaction Dipeptidase E catalyzes the hydrolysis of dipeptides Asp-|-Xaa. It does not act on peptides with N-terminal Glu, Asn or Gln, nor does it cleave isoaspartyl peptides.. Hydrolyzes dipeptides containing N-terminal aspartate residues. May play a role in allowing the cell to use peptide aspartate to spare carbon otherwise required for the synthesis of the aspartate family of amino acids. The sequence is that of Peptidase E from Shewanella sp. (strain ANA-3).